The chain runs to 304 residues: GTP cyclohydrolase FolE2 (304 aa).

It belongs to the GTP cyclohydrolase IV family.

The enzyme catalyses GTP + H2O = 7,8-dihydroneopterin 3'-triphosphate + formate + H(+). Its pathway is cofactor biosynthesis; 7,8-dihydroneopterin triphosphate biosynthesis; 7,8-dihydroneopterin triphosphate from GTP: step 1/1. Functionally, converts GTP to 7,8-dihydroneopterin triphosphate. The chain is GTP cyclohydrolase FolE2 from Chromohalobacter salexigens (strain ATCC BAA-138 / DSM 3043 / CIP 106854 / NCIMB 13768 / 1H11).